We begin with the raw amino-acid sequence, 264 residues long: Small ribosomal subunit protein eS1 (264 aa).

The disordered stretch occupies residues 233–264; the sequence is GEGGGAGKPSGDEAGAKVERADGYEPPVQESV. Positions 242–255 are enriched in basic and acidic residues; sequence SGDEAGAKVERADG.

It belongs to the eukaryotic ribosomal protein eS1 family. Component of the small ribosomal subunit. Mature ribosomes consist of a small (40S) and a large (60S) subunit. The 40S subunit contains about 33 different proteins and 1 molecule of RNA (18S). The 60S subunit contains about 49 different proteins and 3 molecules of RNA (25S, 5.8S and 5S).

Its subcellular location is the cytoplasm. This chain is Small ribosomal subunit protein eS1, found in Eimeria tenella (Coccidian parasite).